A 481-amino-acid polypeptide reads, in one-letter code: Glutamate--tRNA ligase (481 aa).

The short motif at 28–38 is the 'HIGH' region element; sequence PSPTGFLHLGG. Positions 139–148 are enriched in basic and acidic residues; that stretch reads RYDGTWRPEP. A disordered region spans residues 139 to 159; it reads RYDGTWRPEPGKTLPPVPADR. The 'KMSKS' region signature appears at 260–264; sequence KLSKR. Lys263 serves as a coordination point for ATP.

This sequence belongs to the class-I aminoacyl-tRNA synthetase family. Glutamate--tRNA ligase type 1 subfamily. In terms of assembly, monomer.

Its subcellular location is the cytoplasm. It catalyses the reaction tRNA(Glu) + L-glutamate + ATP = L-glutamyl-tRNA(Glu) + AMP + diphosphate. Functionally, catalyzes the attachment of glutamate to tRNA(Glu) in a two-step reaction: glutamate is first activated by ATP to form Glu-AMP and then transferred to the acceptor end of tRNA(Glu). The sequence is that of Glutamate--tRNA ligase from Bordetella bronchiseptica (strain ATCC BAA-588 / NCTC 13252 / RB50) (Alcaligenes bronchisepticus).